Here is a 210-residue protein sequence, read N- to C-terminus: Redox-sensing transcriptional repressor Rex (210 aa).

The segment at residues 17–56 (KYYRYLAELMDNDVDRISSKELSEKIGFTASQIRQDLNNF) is a DNA-binding region (H-T-H motif). Residue 91-96 (GAGNIG) participates in NAD(+) binding.

Belongs to the transcriptional regulatory Rex family. As to quaternary structure, homodimer.

It is found in the cytoplasm. Its function is as follows. Modulates transcription in response to changes in cellular NADH/NAD(+) redox state. The protein is Redox-sensing transcriptional repressor Rex of Clostridium novyi (strain NT).